We begin with the raw amino-acid sequence, 424 residues long: Histidine--tRNA ligase (424 aa).

Belongs to the class-II aminoacyl-tRNA synthetase family. As to quaternary structure, homodimer.

The protein resides in the cytoplasm. The catalysed reaction is tRNA(His) + L-histidine + ATP = L-histidyl-tRNA(His) + AMP + diphosphate + H(+). This Bacillus licheniformis (strain ATCC 14580 / DSM 13 / JCM 2505 / CCUG 7422 / NBRC 12200 / NCIMB 9375 / NCTC 10341 / NRRL NRS-1264 / Gibson 46) protein is Histidine--tRNA ligase.